We begin with the raw amino-acid sequence, 460 residues long: Notoamide biosynthesis cluster transcriptional coactivator notR (460 aa).

The HTH iclR-type domain occupies 74 to 145 (LQDLARQVEI…EPMPNYVSHT (72 aa)). The segment at residues 107–126 (IQDLADLAGVPDIQLRRVIR) is a DNA-binding region (H-T-H motif). The disordered stretch occupies residues 300–320 (TRDFTPQPESSPRPGSASSRV).

The protein localises to the nucleus. Transcription factor that probably regulates the expression of the gene cluster that mediates the biosynthesis of notoamide, a fungal indole alkaloid that belongs to a family of natural products containing a characteristic bicyclo[2.2.2]diazaoctane core. The chain is Notoamide biosynthesis cluster transcriptional coactivator notR from Aspergillus sp. (strain MF297-2).